The sequence spans 30 residues: Snake venom serine protease (30 aa).

The Peptidase S1 domain maps to 1 to 30 (VIGGDECNINEHRFLVALYDPDGFLSGGIL).

The protein belongs to the peptidase S1 family. Snake venom subfamily. As to quaternary structure, monomer. Post-translationally, N-Glycosylated. Expressed by the venom gland.

It is found in the secreted. Its activity is regulated as follows. Inhibited by diisopropylfluorophosphate (DFP). In terms of biological role, snake venom serine protease that catalyzes the hydrolysis of arginine esters, kallikrein substrates Pro-Phe-Arg-MCA and Z-Phe-Arg-MCA. Cleaves kininogen analogs to release bradykinin. Induces contraction of the isolated rat uterus directly at high concentrations, but provokes more forceful contractions when injected in presence of bovine plasma. Shows capillary permeability-increasing activity and hypotensive activity on the anesthetized rat. In Crotalus viridis viridis (Prairie rattlesnake), this protein is Snake venom serine protease.